The chain runs to 217 residues: Adr-2-binding protein 1 (217 aa).

A disordered region spans residues 33-65 (ARPEPQHDSLKRRNTTSSIAKKKAKMTRGDEQI). Positions 44 to 58 (RRNTTSSIAKKKAKM) are enriched in basic residues.

Interacts with double-stranded RNA-specific adenosine deaminase adr-2. As to expression, expressed in main body hypodermal cells, the hypodermal seam cells, pharynx, intestine and some neurons.

It is found in the nucleus. In terms of biological role, required for the A-I editing activity of the double-stranded RNA-specific adenosine deaminase adr-2 by facilitating adr-2 nuclear localization. This Caenorhabditis elegans protein is Adr-2-binding protein 1.